The sequence spans 301 residues: ATP synthase gamma chain (301 aa).

It belongs to the ATPase gamma chain family. In terms of assembly, F-type ATPases have 2 components, CF(1) - the catalytic core - and CF(0) - the membrane proton channel. CF(1) has five subunits: alpha(3), beta(3), gamma(1), delta(1), epsilon(1). CF(0) has three main subunits: a, b and c.

The protein resides in the cell inner membrane. Functionally, produces ATP from ADP in the presence of a proton gradient across the membrane. The gamma chain is believed to be important in regulating ATPase activity and the flow of protons through the CF(0) complex. This is ATP synthase gamma chain from Helicobacter pylori (strain J99 / ATCC 700824) (Campylobacter pylori J99).